Reading from the N-terminus, the 405-residue chain is Phosphatidylinositol 5-phosphate 4-kinase type-2 alpha (405 aa).

A2 is subject to N-acetylalanine. T3 carries the post-translational modification Phosphothreonine. The residue at position 14 (S14) is a Phosphoserine. Residues 33-405 (ASDPLLSVLM…RFLDFIGHIL (373 aa)) form the PIPK domain. Residues 59 to 65 (VMLMPDD) are required for interaction with PIP5K1A. Residues K89 and K145 each carry the N6-acetyllysine modification. Residues 288 to 328 (QEEVECEENDGEEEGESDSTHPIGTPPDSPGNTLNSSPPLA) are disordered. Residues 289 to 304 (EEVECEENDGEEEGES) are compositionally biased toward acidic residues.

As to quaternary structure, homodimer. Interacts with PIP4K2B; the interaction may regulate localization to the nucleus. Probably interacts with PIP5K1A; the interaction inhibits PIP5K1A kinase activity. Phosphorylated in tyrosines. Phosphorylation is induced by light and increases kinase activity. In terms of tissue distribution, detected in rod photoreceptor cells.

It is found in the cell membrane. The protein localises to the nucleus. The protein resides in the lysosome. Its subcellular location is the cytoplasm. It localises to the photoreceptor inner segment. It is found in the cell projection. The protein localises to the cilium. The protein resides in the photoreceptor outer segment. It catalyses the reaction a 1,2-diacyl-sn-glycero-3-phospho-(1D-myo-inositol-5-phosphate) + ATP = a 1,2-diacyl-sn-glycero-3-phospho-(1D-myo-inositol-4,5-bisphosphate) + ADP + H(+). The enzyme catalyses 1,2-dihexadecanoyl-sn-glycero-3-phospho-(1D-myo-inositol-5-phosphate) + ATP = 1,2-dihexadecanoyl-sn-glycero-3-phospho-(1D-myo-inositol-4,5-bisphosphate) + ADP + H(+). The catalysed reaction is 1,2-dihexadecanoyl-sn-glycero-3-phospho-(1D-myo-inositol-5-phosphate) + GTP = 1,2-dihexadecanoyl-sn-glycero-3-phospho-(1D-myo-inositol-4,5-bisphosphate) + GDP + H(+). In rod outer segments, activated by light. Catalyzes the phosphorylation of phosphatidylinositol 5-phosphate (PtdIns5P) on the fourth hydroxyl of the myo-inositol ring, to form phosphatidylinositol 4,5-bisphosphate (PtdIns(4,5)P2). Has both ATP- and GTP-dependent kinase activities. May exert its function by regulating the levels of PtdIns5P, which functions in the cytosol by increasing AKT activity and in the nucleus signals through ING2. May regulate the pool of cytosolic PtdIns5P in response to the activation of tyrosine phosphorylation. Required for lysosome-peroxisome membrane contacts and intracellular cholesterol transport through modulating peroxisomal PtdIns(4,5)P2 level. In collaboration with PIP4K2B, has a role in mediating autophagy in times of nutrient stress. Required for autophagosome-lysosome fusion and the regulation of cellular lipid metabolism. Negatively regulates insulin signaling through a catalytic-independent mechanism. PIP4Ks interact with PIP5Ks and suppress PIP5K-mediated PtdIns(4,5)P2 synthesis and insulin-dependent conversion to PtdIns(3,4,5)P3. May be involved in thrombopoiesis, and the terminal maturation of megakaryocytes and regulation of their size. In Mus musculus (Mouse), this protein is Phosphatidylinositol 5-phosphate 4-kinase type-2 alpha.